The sequence spans 576 residues: Arginine--tRNA ligase (576 aa).

A 'HIGH' region motif is present at residues 122 to 132; sequence PNVAKQMHVGH.

This sequence belongs to the class-I aminoacyl-tRNA synthetase family. In terms of assembly, monomer.

The protein resides in the cytoplasm. It carries out the reaction tRNA(Arg) + L-arginine + ATP = L-arginyl-tRNA(Arg) + AMP + diphosphate. This is Arginine--tRNA ligase from Yersinia pseudotuberculosis serotype O:3 (strain YPIII).